The primary structure comprises 195 residues: GRF1-interacting factor 2 (195 aa).

The disordered stretch occupies residues 166–195; that stretch reads QQPETGLGGNVGLRGGKQDGADGQGKDDGK. The span at 171 to 180 shows a compositional bias: gly residues; sequence GLGGNVGLRG. Residues 181-195 are compositionally biased toward basic and acidic residues; that stretch reads GKQDGADGQGKDDGK.

Belongs to the SS18 family. As to quaternary structure, interacts with GRF1. In terms of tissue distribution, predominantly expressed in shoot tips containing the shoot apical meristem (SAM) and flower buds. Also expressed in mature flowers.

Transcription coactivator that plays a role in the regulation of cell expansion in leaf and cotyledons tissues. Component of a network formed by miR396, the GRFs and their interacting factors (GIFs) acting in the regulation of meristem function, at least partially through the control of cell proliferation. GIFs are involved in the positive regulation of cell proliferation of lateral organs in a functionally redundant manner. In Arabidopsis thaliana (Mouse-ear cress), this protein is GRF1-interacting factor 2 (GIF2).